We begin with the raw amino-acid sequence, 228 residues long: GDT1-like protein 5 (228 aa).

An N-acetylglycine modification is found at Gly-2. 6 helical membrane-spanning segments follow: residues 12 to 32 (LAMT…AILA), 39 to 59 (LVLA…ATLG), 71 to 91 (THHI…WDGF), 133 to 153 (PFLT…NFFG), 173 to 193 (LGVV…AVLG), and 205 to 225 (IVAL…LLTP).

Belongs to the GDT1 family.

It localises to the membrane. The polypeptide is GDT1-like protein 5 (Arabidopsis thaliana (Mouse-ear cress)).